A 301-amino-acid chain; its full sequence is MSVREKMLEILEGIDIRFKEPLHSYSYTKVGGEADYLVFPRNRFELARVVKFANQENIPWMVLGNASNIIVRDGGIRGFVILCDKLNNVSVDGYTIEAEAGANLIETTRIALRHSLTGFEFACGIPGSVGGAVFMNAGAYGGEIAHILQSCKVLTKDGEIETLSAKDLAFGYRHSAIQESGAVVLSVKFALAPGTHQVIKQEMDRLTHLRELKQPLEYPSCGSVFKRPVGHFAGQLISEAGLKGYRIGGVEVSEKHAGFMINVADGTAKDYEDLIQSVIEKVKEHSGITLEREVRILGESK.

In terms of domain architecture, FAD-binding PCMH-type spans 30–194 (VGGEADYLVF…LSVKFALAPG (165 aa)). R173 is an active-site residue. The active-site Proton donor is the S223. Residue E293 is part of the active site.

It belongs to the MurB family. FAD is required as a cofactor.

The protein localises to the cytoplasm. It carries out the reaction UDP-N-acetyl-alpha-D-muramate + NADP(+) = UDP-N-acetyl-3-O-(1-carboxyvinyl)-alpha-D-glucosamine + NADPH + H(+). It functions in the pathway cell wall biogenesis; peptidoglycan biosynthesis. Functionally, cell wall formation. The sequence is that of UDP-N-acetylenolpyruvoylglucosamine reductase from Streptococcus pneumoniae (strain Hungary19A-6).